A 659-amino-acid chain; its full sequence is Anoctamin-10 (659 aa).

The Cytoplasmic segment spans residues 1–207 (MRVTLSTLDT…DSIRSYFGET (207 aa)). The chain crosses the membrane as a helical span at residues 208 to 228 (IALYFGFLEYFTFALIPMAII). Topologically, residues 229 to 240 (GLPYYLFVWEDY) are extracellular. The helical transmembrane segment at 241-261 (DKYVIFASFNLIWSTVILEVW) threads the bilayer. At 262 to 316 (KRGCANMTYRWGTLVMKRQFEEPRPGFHGVLGINSVTGREEPLYSSYKRQLRIYL) the chain is on the cytoplasmic side. The chain crosses the membrane as a helical span at residues 317–337 (VSLPFVCLCLYFSLYVMMIYF). Topologically, residues 338-352 (DMEDWALSLHEDSGS) are extracellular. A helical membrane pass occupies residues 353-373 (EWTSLLLYVPSIVYAVVIEIM). The Cytoplasmic segment spans residues 374–400 (NRLYRYAAEFLTSWENHRLESAYQNHL). The helical transmembrane segment at 401–421 (VLKVLVFNFLNCFASLFYIAF) threads the bilayer. Over 422–500 (VLKDMKLLRQ…YLGTFDDYLE (79 aa)) the chain is Extracellular. A helical transmembrane segment spans residues 501 to 521 (LFLQFGYVSLFSCVYPLAAAF). Topologically, residues 522–553 (AVLNNFTEVNSDALKMCRVFKRPFAEPSASIG) are cytoplasmic. The chain crosses the membrane as a helical span at residues 554-574 (VWQLAFETMSVISVVTNCALI). Residues 575–590 (GMSPQVNAVFPESKTD) are Extracellular-facing. Residues 591-611 (LVLIVVAVEHALLALKFILAF) form a helical membrane-spanning segment. Topologically, residues 612–659 (AIPDKPRHIQQKLARLEFESLEALKQQQMKLVAENLKEEYQEDGKEAT) are cytoplasmic.

The protein belongs to the anoctamin family. As to expression, predominant expression seen in epithelial tissues.

The protein resides in the cell membrane. In terms of biological role, does not exhibit calcium-activated chloride channel (CaCC) activity. Can inhibit the activity of ANO1. In Mus musculus (Mouse), this protein is Anoctamin-10 (Ano10).